A 306-amino-acid chain; its full sequence is D-alanine--D-alanine ligase (306 aa).

In terms of domain architecture, ATP-grasp spans 101–303 (KQVWQAVGLP…FSQLVVKILE (203 aa)). An ATP-binding site is contributed by 134–189 (FTHLGLPLIVKPSREGSSVGMSKVNTLSDLPAALEEAFRHDDDVLVEKWLSGPEYT). Mg(2+)-binding residues include D257, E270, and N272.

Belongs to the D-alanine--D-alanine ligase family. Requires Mg(2+) as cofactor. Mn(2+) is required as a cofactor.

The protein resides in the cytoplasm. The enzyme catalyses 2 D-alanine + ATP = D-alanyl-D-alanine + ADP + phosphate + H(+). It functions in the pathway cell wall biogenesis; peptidoglycan biosynthesis. Cell wall formation. The chain is D-alanine--D-alanine ligase from Pectobacterium atrosepticum (strain SCRI 1043 / ATCC BAA-672) (Erwinia carotovora subsp. atroseptica).